The chain runs to 911 residues: Protein translocase subunit SecA (911 aa).

Residues Gln-87, 105–109 (GEGKT), and Asp-512 contribute to the ATP site. A disordered region spans residues 861–880 (APGLGSEQLSEEGAEVAVAS). 4 residues coordinate Zn(2+): Cys-895, Cys-897, Cys-906, and His-907.

The protein belongs to the SecA family. Monomer and homodimer. Part of the essential Sec protein translocation apparatus which comprises SecA, SecYEG and auxiliary proteins SecDF-YajC and YidC. Zn(2+) serves as cofactor.

It is found in the cell inner membrane. The protein localises to the cytoplasm. It carries out the reaction ATP + H2O + cellular proteinSide 1 = ADP + phosphate + cellular proteinSide 2.. Part of the Sec protein translocase complex. Interacts with the SecYEG preprotein conducting channel. Has a central role in coupling the hydrolysis of ATP to the transfer of proteins into and across the cell membrane, serving both as a receptor for the preprotein-SecB complex and as an ATP-driven molecular motor driving the stepwise translocation of polypeptide chains across the membrane. The protein is Protein translocase subunit SecA of Pseudomonas putida (strain ATCC 47054 / DSM 6125 / CFBP 8728 / NCIMB 11950 / KT2440).